The primary structure comprises 114 residues: UPF0102 protein Shew_0226 (114 aa).

This sequence belongs to the UPF0102 family.

The sequence is that of UPF0102 protein Shew_0226 from Shewanella loihica (strain ATCC BAA-1088 / PV-4).